Here is a 315-residue protein sequence, read N- to C-terminus: Kiwa protein KwaB (315 aa).

Functionally, component of antiviral defense system Kiwa, composed of KwaA and KwaB. Expression of Kiwa in E.coli (strain MG1655) confers resistance to phages lambda and SECphi18. The chain is Kiwa protein KwaB from Escherichia coli O55:H7 (strain RM12579 / EPEC).